Consider the following 1047-residue polypeptide: Protein masquerade (1047 aa).

Residues 1-30 (MPRHSSTMSRLVLPLIFSILLVSKPSPSQA) form the signal peptide. Residues 54–87 (KDCPGVCVHTLATLICYEVLDDVACPSPSMKCCI) form a CLIP 1 region. Intrachain disulfides connect C56–C85, C60–C78, and C69–C86. N95 carries N-linked (GlcNAc...) asparagine glycosylation. 2 stretches are compositionally biased toward low complexity: residues 98–139 (AVRA…STTP) and 148–175 (KRPA…VATA). Residues 98 to 189 (AVRATTTPKT…KEEATKADDA (92 aa)) are disordered. Positions 176–189 (KPKDKEEATKADDA) are enriched in basic and acidic residues. Positions 192–224 (DCTGVCVADRIAEYCEAYLTSDGLCKEGTKCCV) are CLIP 2. Disulfide bonds link C193/C222, C197/C216, and C206/C223. The N-linked (GlcNAc...) asparagine glycan is linked to N251. The disordered stretch occupies residues 252 to 335 (QTLSEKSAPA…PLSNKLKSGQ (84 aa)). A compositionally biased stretch (low complexity) spans 263–280 (SSSTSTTSTTTTTSTTTT). N287 is a glycosylation site (N-linked (GlcNAc...) asparagine). Residues 307-325 (AAEEEEEQETEEDGEEEEP) show a composition bias toward acidic residues. The interval 343–374 (ECEGECMNGIFAIFCDDIDSDAFCPGEESCCV) is CLIP 3. 3 disulfide bridges follow: C344-C372, C348-C366, and C357-C373. The disordered stretch occupies residues 376 to 428 (GGASEATPSSKAPPTKPAIKHAPKPAAKPARPASPPPAPPSSTSGGGGGGDFL). The CLIP 4 stretch occupies residues 457-492 (RCPGFCLLNIMAAFCERPSVLVSTPTTCAKGSVCCD). Cystine bridges form between C458–C490, C462–C484, and C471–C491. The segment at 498–527 (APKPKLPPPTPSPTASPTAPPYVLPNTPSP) is disordered. The span at 501–527 (PKLPPPTPSPTASPTAPPYVLPNTPSP) shows a compositional bias: pro residues. The tract at residues 532–567 (ECPGSCIVSLLSFTCFKNAEMTDLFRCKRSGQICCA) is CLIP 5. 3 cysteine pairs are disulfide-bonded: C533–C565, C537–C558, and C546–C566. A glycan (N-linked (GlcNAc...) asparagine) is linked at N582. A disordered region spans residues 583-673 (DTAYYPAPPP…TTTTTTTTPR (91 aa)). 3 stretches are compositionally biased toward pro residues: residues 588 to 606 (PAPP…PQTP), 613 to 638 (NPPP…PPAP), and 650 to 661 (GLPPQPQPPMTT). Positions 662–672 (PPTTTTTTTTP) are enriched in low complexity. Intrachain disulfides connect C682–C916, C829–C845, C930–C1001, C961–C981, and C991–C1019. Residues N726 and N794 are each glycosylated (N-linked (GlcNAc...) asparagine). Positions 803-1043 (VVGGEDGENG…FIGWINQIIS (241 aa)) are peptidase S1.

The protein belongs to the peptidase S1 family. CLIP subfamily. Proteolytically cleaved and thereafter secreted.

It localises to the secreted. The protein resides in the cell projection. It is found in the axon. Functionally, in embryogenesis, has a role in somatic muscle attachment and in the development of axonal pathways probably by stabilizing cell-matrix adhesion and/or by acting as a competitive antagonist of serine proteases. The chain is Protein masquerade from Drosophila melanogaster (Fruit fly).